A 106-amino-acid polypeptide reads, in one-letter code: Large ribosomal subunit protein eL42 (106 aa).

The disordered stretch occupies residues 34–53; sequence YAQGRRRYDRKRSGYGGQTK. Lys53 bears the N6-methyllysine mark.

Belongs to the eukaryotic ribosomal protein eL42 family.

The protein localises to the cytoplasm. The chain is Large ribosomal subunit protein eL42 (RPL36AL) from Pongo abelii (Sumatran orangutan).